The sequence spans 688 residues: Zinc finger protein 770 (688 aa).

Lys11 is covalently cross-linked (Glycyl lysine isopeptide (Lys-Gly) (interchain with G-Cter in SUMO2)). 3 consecutive C2H2-type zinc fingers follow at residues 27 to 49 (YVCN…YLIH), 55 to 77 (FECD…QLTH), and 81 to 103 (FKCS…QQLH). Glycyl lysine isopeptide (Lys-Gly) (interchain with G-Cter in SUMO2) cross-links involve residues Lys112, Lys121, and Lys146. C2H2-type zinc fingers lie at residues 160–182 (HACT…VLIH), 188–210 (FKCV…QLTH), and 216–238 (FQCC…KQIH). Lys262 is covalently cross-linked (Glycyl lysine isopeptide (Lys-Gly) (interchain with G-Cter in SUMO2)). A C2H2-type 7; degenerate zinc finger spans residues 294–318 (FQCPKCEKCFESEQILNEHSCFPAR). Glycyl lysine isopeptide (Lys-Gly) (interchain with G-Cter in SUMO2) cross-links involve residues Lys420 and Lys437. C2H2-type zinc fingers lie at residues 475–497 (CPCD…YLIH), 503–525 (FGCN…EQTH), 623–645 (YRCS…YLIH), and 651–673 (FECS…QLTH). Residue Lys681 forms a Glycyl lysine isopeptide (Lys-Gly) (interchain with G-Cter in SUMO2) linkage.

Belongs to the krueppel C2H2-type zinc-finger protein family.

The protein localises to the nucleus. May be involved in transcriptional regulation. This chain is Zinc finger protein 770 (ZNF770), found in Pongo abelii (Sumatran orangutan).